The sequence spans 406 residues: Tyrosine--tRNA ligase (406 aa).

Tyr-35 is an L-tyrosine binding site. The short motif at 40-49 (PTGPSLHIGH) is the 'HIGH' region element. L-tyrosine-binding residues include Tyr-168 and Gln-172. Residues 228-232 (KMGKS) carry the 'KMSKS' region motif. Lys-231 is a binding site for ATP. The S4 RNA-binding domain maps to 339–405 (IGIIDLFAEA…GKKRFMRIIF (67 aa)).

The protein belongs to the class-I aminoacyl-tRNA synthetase family. TyrS type 1 subfamily. Homodimer.

It is found in the cytoplasm. It catalyses the reaction tRNA(Tyr) + L-tyrosine + ATP = L-tyrosyl-tRNA(Tyr) + AMP + diphosphate + H(+). Functionally, catalyzes the attachment of tyrosine to tRNA(Tyr) in a two-step reaction: tyrosine is first activated by ATP to form Tyr-AMP and then transferred to the acceptor end of tRNA(Tyr). The sequence is that of Tyrosine--tRNA ligase from Treponema denticola (strain ATCC 35405 / DSM 14222 / CIP 103919 / JCM 8153 / KCTC 15104).